The following is a 309-amino-acid chain: GalNAc(5)-diNAcBac-PP-undecaprenol beta-1,3-glucosyltransferase (309 aa).

The chain crosses the membrane as a helical span at residues 273-291; it reads SLSIKINAPALILLILSII.

This sequence belongs to the glycosyltransferase 2 family.

Its subcellular location is the membrane. The catalysed reaction is [alpha-D-GalNAc-(1-&gt;4)]4-alpha-D-GalNAc-(1-&gt;3)-alpha-D-diNAcBac-tri-trans,hepta-cis-undecaprenyl diphosphate + UDP-alpha-D-glucose = [alpha-D-GalNAc-(1-&gt;4)]2-[beta-D-Glc-(1-&gt;3)]-[alpha-D-GalNAc-(1-&gt;4)]2-alpha-D-GalNAc-(1-&gt;3)-alpha-D-diNAcBac-tri-trans,hepta-cis-undecaprenyl diphosphate + UDP + H(+). Its pathway is protein modification; protein glycosylation. Functionally, glucosyltransferase that adds he final branching glucose to complete the final heptasaccharide structure in the N-linked protein glycosylation pathway. This chain is GalNAc(5)-diNAcBac-PP-undecaprenol beta-1,3-glucosyltransferase (pglI), found in Campylobacter jejuni subsp. jejuni serotype O:2 (strain ATCC 700819 / NCTC 11168).